The chain runs to 581 residues: Solute carrier family 15 member 3 (581 aa).

The segment covering 1 to 14 (MPAPRAREQPRVPG) has biased composition (basic and acidic residues). The interval 1-26 (MPAPRAREQPRVPGERQPLLPRGARG) is disordered. A helical transmembrane segment spans residues 38 to 58 (VLLVEMLERAAFFGVTANLVL). N61 and N66 each carry an N-linked (GlcNAc...) asparagine glycan. Helical transmembrane passes span 76–96 (ALVF…LADV), 103–123 (AVAL…ATAF), and 155–175 (PYCA…ASSV). N178 carries N-linked (GlcNAc...) asparagine glycosylation. The chain crosses the membrane as a helical span at residues 200–220 (NWFYWSINLGAVLSLLVVAFI). An N-linked (GlcNAc...) asparagine glycan is attached at N223. The next 2 membrane-spanning stretches (helical) occupy residues 232-252 (IPVG…PVFI) and 310-330 (FQVL…WMVY). N-linked (GlcNAc...) asparagine glycosylation is present at N356. Transmembrane regions (helical) follow at residues 369–389 (TIPE…LVPL) and 411–431 (MALG…LEME). N439 is a glycosylation site (N-linked (GlcNAc...) asparagine). Helical transmembrane passes span 458–478 (IWWQ…ASIP), 497–517 (GIFF…VALL), and 540–560 (LYFF…VWIA).

This sequence belongs to the major facilitator superfamily. Proton-dependent oligopeptide transporter (POT/PTR) (TC 2.A.17) family.

It is found in the lysosome membrane. The protein localises to the endosome membrane. It catalyses the reaction glycylglycylglycine(out) + n H(+)(out) = glycylglycylglycine(in) + n H(+)(in). The enzyme catalyses carnosine(out) + n H(+)(out) = carnosine(in) + n H(+)(in). It carries out the reaction L-histidine(out) + n H(+)(out) = L-histidine(in) + n H(+)(in). The catalysed reaction is N-acetyl-D-muramoyl-L-alanyl-D-isoglutamine(out) + n H(+)(out) = N-acetyl-D-muramoyl-L-alanyl-D-isoglutamine(in) + n H(+)(in). In terms of biological role, proton-coupled amino-acid transporter that transports free histidine and certain di- and tripeptides, and is involved in innate immune response. Also able to transport carnosine. Involved in the detection of microbial pathogens by toll-like receptors (TLRs) and NOD-like receptors (NLRs), probably by mediating transport of bacterial peptidoglycans across the endolysosomal membrane: catalyzes the transport of certain bacterial peptidoglycans, such as muramyl dipeptide (MDP), the NOD2 ligand. This is Solute carrier family 15 member 3 from Homo sapiens (Human).